A 249-amino-acid polypeptide reads, in one-letter code: Mediator of RNA polymerase II transcription subunit 8 (249 aa).

Residues 154-200 (LEEREMGIQNVVTGLRRQLEDEDEEASESEEEVEEEEMEVVGVRRRS) are a coiled coil. The tract at residues 170–249 (RQLEDEDEEA…MTTGIPPTQR (80 aa)) is disordered. The segment covering 173–192 (EDEDEEASESEEEVEEEEME) has biased composition (acidic residues). Positions 211–232 (AAPAPGSRQQQQQQKAAGPAVP) are enriched in low complexity.

The protein belongs to the Mediator complex subunit 8 family. As to quaternary structure, component of the Mediator complex.

It is found in the nucleus. Component of the Mediator complex, a coactivator involved in the regulated transcription of nearly all RNA polymerase II-dependent genes. Mediator functions as a bridge to convey information from gene-specific regulatory proteins to the basal RNA polymerase II transcription machinery. Mediator is recruited to promoters by direct interactions with regulatory proteins and serves as a scaffold for the assembly of a functional preinitiation complex with RNA polymerase II and the general transcription factors. The chain is Mediator of RNA polymerase II transcription subunit 8 (med8) from Aspergillus fumigatus (strain ATCC MYA-4609 / CBS 101355 / FGSC A1100 / Af293) (Neosartorya fumigata).